We begin with the raw amino-acid sequence, 102 residues long: Small ribosomal subunit protein uS10 (102 aa).

This sequence belongs to the universal ribosomal protein uS10 family. In terms of assembly, part of the 30S ribosomal subunit.

Functionally, involved in the binding of tRNA to the ribosomes. In Thermococcus kodakarensis (strain ATCC BAA-918 / JCM 12380 / KOD1) (Pyrococcus kodakaraensis (strain KOD1)), this protein is Small ribosomal subunit protein uS10.